A 699-amino-acid chain; its full sequence is Elongation factor G (699 aa).

Residues 8-289 (ERYRNIGISA…AVVEYMPAPT (282 aa)) enclose the tr-type G domain. GTP is bound by residues 17–24 (AHIDAGKT), 88–92 (DTPGH), and 142–145 (NKMD).

It belongs to the TRAFAC class translation factor GTPase superfamily. Classic translation factor GTPase family. EF-G/EF-2 subfamily.

The protein resides in the cytoplasm. Its function is as follows. Catalyzes the GTP-dependent ribosomal translocation step during translation elongation. During this step, the ribosome changes from the pre-translocational (PRE) to the post-translocational (POST) state as the newly formed A-site-bound peptidyl-tRNA and P-site-bound deacylated tRNA move to the P and E sites, respectively. Catalyzes the coordinated movement of the two tRNA molecules, the mRNA and conformational changes in the ribosome. The sequence is that of Elongation factor G from Variovorax paradoxus (strain S110).